Consider the following 294-residue polypeptide: tRNA pseudouridine synthase B (294 aa).

D38 functions as the Nucleophile in the catalytic mechanism.

It belongs to the pseudouridine synthase TruB family. Type 1 subfamily.

It catalyses the reaction uridine(55) in tRNA = pseudouridine(55) in tRNA. In terms of biological role, responsible for synthesis of pseudouridine from uracil-55 in the psi GC loop of transfer RNAs. This Clostridium perfringens (strain 13 / Type A) protein is tRNA pseudouridine synthase B.